The following is a 305-amino-acid chain: Ribosomal RNA small subunit methyltransferase H (305 aa).

S-adenosyl-L-methionine is bound by residues 47-49, Asp66, Phe93, Asp108, and Gln115; that span reads GGH. Residues 279 to 305 are disordered; it reads ADSNEKLNNPRSRSAKLRLAKKRNPNE. A compositionally biased stretch (basic residues) spans 291–305; it reads RSAKLRLAKKRNPNE.

This sequence belongs to the methyltransferase superfamily. RsmH family.

The protein localises to the cytoplasm. It carries out the reaction cytidine(1402) in 16S rRNA + S-adenosyl-L-methionine = N(4)-methylcytidine(1402) in 16S rRNA + S-adenosyl-L-homocysteine + H(+). Its function is as follows. Specifically methylates the N4 position of cytidine in position 1402 (C1402) of 16S rRNA. This chain is Ribosomal RNA small subunit methyltransferase H, found in Prochlorococcus marinus (strain SARG / CCMP1375 / SS120).